The following is a 58-amino-acid chain: Large ribosomal subunit protein uL30 (58 aa).

Belongs to the universal ribosomal protein uL30 family. In terms of assembly, part of the 50S ribosomal subunit.

The protein is Large ribosomal subunit protein uL30 of Pseudomonas putida (strain ATCC 700007 / DSM 6899 / JCM 31910 / BCRC 17059 / LMG 24140 / F1).